We begin with the raw amino-acid sequence, 257 residues long: DNA repair protein RecO (257 aa).

It belongs to the RecO family.

Functionally, involved in DNA repair and RecF pathway recombination. The chain is DNA repair protein RecO from Clostridium kluyveri (strain ATCC 8527 / DSM 555 / NBRC 12016 / NCIMB 10680 / K1).